A 181-amino-acid chain; its full sequence is Ferritin (181 aa).

The Ferritin-like diiron domain occupies 6–155 (RHNYHEDCEP…NLITRLKRAG (150 aa)). Residues Glu-23, Glu-58, His-61, Glu-103, and Gln-137 each contribute to the Fe cation site.

This sequence belongs to the ferritin family. Oligomer of 12 or 24 subunits. The functional molecule is roughly spherical and contains a central cavity into which the polymeric mineral iron core is deposited. Post-translationally, the N-terminus is blocked.

It is found in the cytoplasm. It carries out the reaction 4 Fe(2+) + O2 + 4 H(+) = 4 Fe(3+) + 2 H2O. Its function is as follows. Stores iron in a soluble, non-toxic, readily available form. Important for iron homeostasis. Has ferroxidase activity. Iron is taken up in the ferrous form and deposited as ferric hydroxides after oxidation. The chain is Ferritin from Pacifastacus leniusculus (Signal crayfish).